Consider the following 45-residue polypeptide: Iota-conotoxin-like R11.10 (45 aa).

Disulfide bonds link Cys5-Cys19, Cys12-Cys22, Cys18-Cys27, and Cys21-Cys36. Leu43 carries the D-leucine modification. Position 45 (Arg45) is a propeptide, removed by a carboxypeptidase.

It belongs to the conotoxin I1 superfamily. In terms of tissue distribution, expressed by the venom duct.

The protein localises to the secreted. Its function is as follows. Iota-conotoxins bind to voltage-gated sodium channels (Nav) and act as agonists by shifting the voltage-dependence of activation to more hyperpolarized levels. Produces general excitatory symptoms. This Conus radiatus (Rayed cone) protein is Iota-conotoxin-like R11.10.